The sequence spans 644 residues: UvrABC system protein C (644 aa).

The region spanning 47-125 is the GIY-YIG domain; sequence ARPGVYRMLD…IKRYRPPYNV (79 aa). A UVR domain is found at 235–270; sequence TAVQKRLGEAMTRAADAMDFEQAAVLRDRLKALTFI.

It belongs to the UvrC family. Interacts with UvrB in an incision complex.

It is found in the cytoplasm. Functionally, the UvrABC repair system catalyzes the recognition and processing of DNA lesions. UvrC both incises the 5' and 3' sides of the lesion. The N-terminal half is responsible for the 3' incision and the C-terminal half is responsible for the 5' incision. This is UvrABC system protein C from Sphingopyxis alaskensis (strain DSM 13593 / LMG 18877 / RB2256) (Sphingomonas alaskensis).